The sequence spans 390 residues: tRNA-specific 2-thiouridylase MnmA (390 aa).

Residues 36 to 43 (GMSGGVDS) and methionine 62 contribute to the ATP site. The interaction with target base in tRNA stretch occupies residues 122–124 (NPD). Cysteine 127 (nucleophile) is an active-site residue. A disulfide bridge links cysteine 127 with cysteine 223. An ATP-binding site is contributed by glycine 151. The interaction with tRNA stretch occupies residues 173–175 (KDQ). Catalysis depends on cysteine 223, which acts as the Cysteine persulfide intermediate. An interaction with tRNA region spans residues 335 to 336 (RY).

The protein belongs to the MnmA/TRMU family.

It localises to the cytoplasm. The enzyme catalyses S-sulfanyl-L-cysteinyl-[protein] + uridine(34) in tRNA + AH2 + ATP = 2-thiouridine(34) in tRNA + L-cysteinyl-[protein] + A + AMP + diphosphate + H(+). Catalyzes the 2-thiolation of uridine at the wobble position (U34) of tRNA, leading to the formation of s(2)U34. The protein is tRNA-specific 2-thiouridylase MnmA of Marinomonas sp. (strain MWYL1).